The primary structure comprises 238 residues: ATP synthase subunit a (238 aa).

Transmembrane regions (helical) follow at residues Met18–Gly38, Phe76–Pro96, Val117–Ile137, Leu195–Ile215, and Gly216–Glu236.

It belongs to the ATPase A chain family. As to quaternary structure, F-type ATPases have 2 components, CF(1) - the catalytic core - and CF(0) - the membrane proton channel. CF(1) has five subunits: alpha(3), beta(3), gamma(1), delta(1), epsilon(1). CF(0) has three main subunits: a(1), b(2) and c(9-12). The alpha and beta chains form an alternating ring which encloses part of the gamma chain. CF(1) is attached to CF(0) by a central stalk formed by the gamma and epsilon chains, while a peripheral stalk is formed by the delta and b chains.

The protein resides in the cell membrane. Key component of the proton channel; it plays a direct role in the translocation of protons across the membrane. The protein is ATP synthase subunit a of Alkalihalophilus pseudofirmus (strain ATCC BAA-2126 / JCM 17055 / OF4) (Bacillus pseudofirmus).